The primary structure comprises 317 residues: Protoheme IX farnesyltransferase (317 aa).

Transmembrane regions (helical) follow at residues phenylalanine 25 to methionine 45, proline 54 to leucine 74, leucine 126 to leucine 146, isoleucine 154 to glycine 174, leucine 181 to valine 201, isoleucine 227 to leucine 244, leucine 249 to histidine 271, and alanine 281 to leucine 301.

Belongs to the UbiA prenyltransferase family. Protoheme IX farnesyltransferase subfamily.

It localises to the cell inner membrane. The enzyme catalyses heme b + (2E,6E)-farnesyl diphosphate + H2O = Fe(II)-heme o + diphosphate. Its pathway is porphyrin-containing compound metabolism; heme O biosynthesis; heme O from protoheme: step 1/1. Converts heme B (protoheme IX) to heme O by substitution of the vinyl group on carbon 2 of heme B porphyrin ring with a hydroxyethyl farnesyl side group. This is Protoheme IX farnesyltransferase from Methylobacterium sp. (strain 4-46).